We begin with the raw amino-acid sequence, 874 residues long: Alanine--tRNA ligase (874 aa).

Zn(2+) is bound by residues His-564, His-568, Cys-665, and His-669.

Belongs to the class-II aminoacyl-tRNA synthetase family. Zn(2+) serves as cofactor.

The protein resides in the cytoplasm. The catalysed reaction is tRNA(Ala) + L-alanine + ATP = L-alanyl-tRNA(Ala) + AMP + diphosphate. Catalyzes the attachment of alanine to tRNA(Ala) in a two-step reaction: alanine is first activated by ATP to form Ala-AMP and then transferred to the acceptor end of tRNA(Ala). Also edits incorrectly charged Ser-tRNA(Ala) and Gly-tRNA(Ala) via its editing domain. This chain is Alanine--tRNA ligase, found in Burkholderia mallei (strain ATCC 23344).